The following is a 236-amino-acid chain: 2,3,4,5-tetrahydropyridine-2,6-dicarboxylate N-acetyltransferase (236 aa).

It belongs to the transferase hexapeptide repeat family. DapH subfamily.

It carries out the reaction (S)-2,3,4,5-tetrahydrodipicolinate + acetyl-CoA + H2O = L-2-acetamido-6-oxoheptanedioate + CoA. Its pathway is amino-acid biosynthesis; L-lysine biosynthesis via DAP pathway; LL-2,6-diaminopimelate from (S)-tetrahydrodipicolinate (acetylase route): step 1/3. In terms of biological role, catalyzes the transfer of an acetyl group from acetyl-CoA to tetrahydrodipicolinate. The protein is 2,3,4,5-tetrahydropyridine-2,6-dicarboxylate N-acetyltransferase of Clostridium beijerinckii (strain ATCC 51743 / NCIMB 8052) (Clostridium acetobutylicum).